The primary structure comprises 537 residues: Lysosomal cobalamin transport escort protein LMBD1 (537 aa).

Residues 1 to 7 (MATGSTE) lie on the Extracellular side of the membrane. The chain crosses the membrane as a helical span at residues 8-28 (LLIGWCIFGVLLLAILAFCWV). Topologically, residues 29 to 47 (YVRKYQSHQESEVISTITA) are cytoplasmic. Residues 48 to 68 (ISSLAIALITSALLPVDIFLV) traverse the membrane as a helical segment. Residues 69 to 98 (SFMKNHNGTFKDWAENNDTRIQIENTVLIG) are Extracellular-facing. N-linked (GlcNAc...) asparagine glycosylation is found at Asn75 and Asn85. A helical transmembrane segment spans residues 99 to 119 (YYTLYSIILFCVFLWIPFVYF). Topologically, residues 120 to 142 (YYEEKDDTDGSHCSQIGSALKYT) are cytoplasmic. The helical transmembrane segment at 143–163 (SGFVLVCSCLLLIGAFAPLDI) threads the bilayer. Residues 164–186 (PSKANATELDKIKLLFQNLGSSN) lie on the Extracellular side of the membrane. N-linked (GlcNAc...) asparagine glycosylation occurs at Asn168. The helical transmembrane segment at 187–207 (GLAALSFSISSLTLIGMLAAI) threads the bilayer. Topologically, residues 208–303 (TYTAYGMSAL…KCCLVMRPFK (96 aa)) are cytoplasmic. Residues 304-324 (IVWGILFILVALLFIVSLFLS) form a helical membrane-spanning segment. Residues 325–362 (NLDKALHSAGINTGFIIFGTNLTNPLNILLPVLQTVFP) are Extracellular-facing. Asn345 carries an N-linked (GlcNAc...) asparagine glycan. Residues 363–383 (LDYIFITTITMYFIFTSMAGI) form a helical membrane-spanning segment. Residues 384–406 (RNMGIWFFWIRLYKIRRRRTRPQ) are Cytoplasmic-facing. The chain crosses the membrane as a helical span at residues 407-427 (ALLFLCMILLLIVLHTSYMIY). Residues 428 to 484 (SLAPQYVMYGSQKYLWENNSTQETAIGNSSALVLKDCDASAPEDQCTVTRTYLFLHK) are Extracellular-facing. Residues Asn445, Asn446, and Asn455 are each glycosylated (N-linked (GlcNAc...) asparagine). Residues 485 to 505 (FWFFSSIYYFGNWAFIVVFVI) form a helical membrane-spanning segment. The Cytoplasmic segment spans residues 506–537 (GLIVSCCKGKKSVIEGEVEDDDSDLSDDEDHP).

Belongs to the LIMR family. LMBRD1 subfamily.

It localises to the endoplasmic reticulum membrane. Its subcellular location is the lysosome membrane. It is found in the cell membrane. Lysosomal membrane chaperone required to export cobalamin (vitamin B12) from the lysosome to the cytosol, allowing its conversion to cofactors. Targets ABCD4 transporter from the endoplasmic reticulum to the lysosome. Then forms a complex with lysosomal ABCD4 and cytoplasmic MMACHC to transport cobalamin across the lysosomal membrane. May play a role in mediating and regulating the internalization of the insulin receptor. The protein is Lysosomal cobalamin transport escort protein LMBD1 (lmbrd1) of Xenopus laevis (African clawed frog).